A 179-amino-acid chain; its full sequence is Cell division protein ZapC (179 aa).

It belongs to the ZapC family. In terms of assembly, interacts directly with FtsZ.

The protein localises to the cytoplasm. In terms of biological role, contributes to the efficiency of the cell division process by stabilizing the polymeric form of the cell division protein FtsZ. Acts by promoting interactions between FtsZ protofilaments and suppressing the GTPase activity of FtsZ. This is Cell division protein ZapC from Aliivibrio salmonicida (strain LFI1238) (Vibrio salmonicida (strain LFI1238)).